The primary structure comprises 440 residues: Glycerophosphocholine cholinephosphodiesterase ENPP6 (440 aa).

An N-terminal signal peptide occupies residues 1 to 22; that stretch reads MAVKLGTLLLALALGLAQPASA. 3 residues coordinate substrate: Asp-32, Ser-71, and Asn-92. Zn(2+) is bound by residues Asp-32 and Ser-71. Catalysis depends on Ser-71, which acts as the Nucleophile. Phosphoserine is present on Ser-71. 2 N-linked (GlcNAc...) asparagine glycosylation sites follow: Asn-100 and Asn-118. A disulfide bridge connects residues Cys-142 and Cys-154. Asp-193 contacts substrate. Asp-193, His-197, Asp-240, and His-241 together coordinate Zn(2+). Residue His-241 participates in substrate binding. N-linked (GlcNAc...) asparagine glycosylation occurs at Asn-341. His-354 provides a ligand contact to substrate. Residue His-354 coordinates Zn(2+). Asn-404 is a glycosylation site (N-linked (GlcNAc...) asparagine). Ala-418 carries GPI-anchor amidated alanine lipidation. Positions 419–440 are cleaved as a propeptide — removed in mature form; it reads GTTPPVQPSHCALALILLFLLA.

Belongs to the nucleotide pyrophosphatase/phosphodiesterase family. As to quaternary structure, homodimer; disulfide-linked. Homotetramer. It depends on Zn(2+) as a cofactor.

Its subcellular location is the cell membrane. The enzyme catalyses sn-glycerol 3-phosphocholine + H2O = phosphocholine + glycerol + H(+). The catalysed reaction is a 1-acyl-sn-glycero-3-phosphocholine + H2O = a 1-acyl-sn-glycerol + phosphocholine + H(+). It catalyses the reaction a 1-O-alkyl-sn-glycero-3-phosphocholine + H2O = a 1-O-alkyl-sn-glycerol + phosphocholine + H(+). It carries out the reaction 1-dodecanoyl-sn-glycero-3-phosphocholine + H2O = 1-dodecanoyl-sn-glycerol + phosphocholine + H(+). The enzyme catalyses 1-hexadecanoyl-sn-glycero-3-phosphocholine + H2O = 1-hexadecanoyl-sn-glycerol + phosphocholine + H(+). The catalysed reaction is 1-(5Z,8Z,11Z,14Z-eicosatetraenoyl)-sn-glycero-3-phosphocholine + H2O = 1-(5Z,8Z,11Z,14Z-eicosatetraenoyl)-sn-glycerol + phosphocholine + H(+). It catalyses the reaction 1-tetradecanoyl-sn-glycero-3-phosphocholine + H2O = 1-tetradecanoyl-sn-glycerol + phosphocholine + H(+). It carries out the reaction sphing-4-enine-phosphocholine + H2O = sphing-4-enine + phosphocholine + H(+). The enzyme catalyses 1-(9Z-octadecenoyl)-sn-glycero-3-phosphocholine + H2O = 1-(9Z-octadecenoyl)-sn-glycerol + phosphocholine + H(+). The catalysed reaction is 1-(9Z,12Z)-octadecadienoyl-sn-glycero-3-phosphocholine + H2O = 1-(9Z,12Z-octadecadienoyl)-sn-glycerol + phosphocholine + H(+). It catalyses the reaction glycero-2-phosphocholine + H2O = phosphocholine + glycerol + H(+). Its activity is regulated as follows. Inhibited by EDTA and EGTA in vitro. In terms of biological role, choline-specific glycerophosphodiesterase that hydrolyzes glycerophosphocholine (GPC) and lysophosphatidylcholine (LPC) and contributes to supplying choline to the cells. Has a preference for LPC with short (12:0 and 14:0) or polyunsaturated (18:2 and 20:4) fatty acids. In vitro, hydrolyzes only choline-containing lysophospholipids, such as sphingosylphosphorylcholine (SPC), platelet-activating factor (PAF) and lysoPAF, but not other lysophospholipids. This Pongo abelii (Sumatran orangutan) protein is Glycerophosphocholine cholinephosphodiesterase ENPP6.